Consider the following 181-residue polypeptide: ADP-ribosylation factor 2-A (181 aa).

Glycine 2 carries N-myristoyl glycine lipidation. GTP is bound by residues 24 to 31 (GLDAAGKT), 67 to 71 (DVGGQ), and 126 to 129 (NKQD).

Belongs to the small GTPase superfamily. Arf family.

It localises to the golgi apparatus. Activated by AGD10. Functionally, GTP-binding protein involved in protein trafficking; may modulate vesicle budding and uncoating within the Golgi apparatus. This chain is ADP-ribosylation factor 2-A (ARF2-A), found in Arabidopsis thaliana (Mouse-ear cress).